Consider the following 321-residue polypeptide: Phospho-N-acetylmuramoyl-pentapeptide-transferase (321 aa).

Helical transmembrane passes span Met4–Pro24, Thr51–Phe71, Ser75–Ile95, Gln109–Ile129, Gly139–Val159, Gly173–Gly193, Ser195–Phe215, Met222–Leu242, Leu247–Val267, and Val297–Met317.

The protein belongs to the glycosyltransferase 4 family. MraY subfamily. It depends on Mg(2+) as a cofactor.

The protein localises to the cell membrane. The enzyme catalyses UDP-N-acetyl-alpha-D-muramoyl-L-alanyl-gamma-D-glutamyl-meso-2,6-diaminopimeloyl-D-alanyl-D-alanine + di-trans,octa-cis-undecaprenyl phosphate = di-trans,octa-cis-undecaprenyl diphospho-N-acetyl-alpha-D-muramoyl-L-alanyl-D-glutamyl-meso-2,6-diaminopimeloyl-D-alanyl-D-alanine + UMP. It participates in cell wall biogenesis; peptidoglycan biosynthesis. In terms of biological role, catalyzes the initial step of the lipid cycle reactions in the biosynthesis of the cell wall peptidoglycan: transfers peptidoglycan precursor phospho-MurNAc-pentapeptide from UDP-MurNAc-pentapeptide onto the lipid carrier undecaprenyl phosphate, yielding undecaprenyl-pyrophosphoryl-MurNAc-pentapeptide, known as lipid I. In Heliobacterium modesticaldum (strain ATCC 51547 / Ice1), this protein is Phospho-N-acetylmuramoyl-pentapeptide-transferase.